The primary structure comprises 374 residues: Ribosomal RNA large subunit methyltransferase G (374 aa).

It belongs to the methyltransferase superfamily. RlmG family.

It localises to the cytoplasm. It carries out the reaction guanosine(1835) in 23S rRNA + S-adenosyl-L-methionine = N(2)-methylguanosine(1835) in 23S rRNA + S-adenosyl-L-homocysteine + H(+). In terms of biological role, specifically methylates the guanine in position 1835 (m2G1835) of 23S rRNA. This is Ribosomal RNA large subunit methyltransferase G from Pseudomonas putida (strain GB-1).